A 248-amino-acid chain; its full sequence is Triosephosphate isomerase (248 aa).

Residues Asn-10 and Lys-12 each contribute to the substrate site. Catalysis depends on His-95, which acts as the Electrophile. The Proton acceptor role is filled by Glu-165.

Belongs to the triosephosphate isomerase family. Homodimer.

It catalyses the reaction D-glyceraldehyde 3-phosphate = dihydroxyacetone phosphate. The protein operates within carbohydrate biosynthesis; gluconeogenesis. Its pathway is carbohydrate degradation; glycolysis; D-glyceraldehyde 3-phosphate from glycerone phosphate: step 1/1. The chain is Triosephosphate isomerase (TPI1) from Kluyveromyces marxianus (Yeast).